Here is a 2375-residue protein sequence, read N- to C-terminus: Talin-2 (2375 aa).

The FERM domain occupies 88–406; the sequence is RPQKIRMLDG…GYIDIILKKK (319 aa). The segment at 312–406 is interaction with PIP5K1C; that stretch reads GVSFFLVKEK…GYIDIILKKK (95 aa). Phosphoserine is present on residues serine 428, serine 450, serine 624, and serine 1024. Tyrosine 1666 is subject to Phosphotyrosine. The I/LWEQ domain occupies 2205 to 2375; the sequence is TEWVDPEDPT…KRLQAAGNAV (171 aa).

As to quaternary structure, interacts directly with PIP5K1C.

It is found in the cytoplasm. Its subcellular location is the cell junction. The protein localises to the focal adhesion. The protein resides in the synapse. It localises to the cell membrane. It is found in the cytoskeleton. Functionally, as a major component of focal adhesion plaques that links integrin to the actin cytoskeleton, may play an important role in cell adhesion. Recruits PIP5K1C to focal adhesion plaques and strongly activates its kinase activity. The sequence is that of Talin-2 (Tln2) from Mus musculus (Mouse).